We begin with the raw amino-acid sequence, 109 residues long: Putative double-stranded DNA mimic protein CKO_01325 (109 aa).

Belongs to the putative dsDNA mimic protein family.

Its function is as follows. May act as a double-stranded DNA (dsDNA) mimic. Probably regulates the activity of a dsDNA-binding protein. This is Putative double-stranded DNA mimic protein CKO_01325 from Citrobacter koseri (strain ATCC BAA-895 / CDC 4225-83 / SGSC4696).